Reading from the N-terminus, the 205-residue chain is Large ribosomal subunit protein uL4 (205 aa).

Positions 56 to 76 are disordered; sequence VSGTTAKPYRQKHTGRARQGS.

Belongs to the universal ribosomal protein uL4 family. In terms of assembly, part of the 50S ribosomal subunit.

In terms of biological role, one of the primary rRNA binding proteins, this protein initially binds near the 5'-end of the 23S rRNA. It is important during the early stages of 50S assembly. It makes multiple contacts with different domains of the 23S rRNA in the assembled 50S subunit and ribosome. Functionally, forms part of the polypeptide exit tunnel. This is Large ribosomal subunit protein uL4 from Ehrlichia ruminantium (strain Welgevonden).